Reading from the N-terminus, the 715-residue chain is Integrator complex subunit 13 (715 aa).

2 disordered regions span residues 572–612 (KPPE…SERI) and 626–659 (AEVI…SKGP). A Nuclear localization signal (NLS) motif is present at residues 581 to 591 (KRGRKREDKEE). A cleavage module binding motif (CMBM) region spans residues 658–703 (GPMSLLSLWSSRINTANSRKHQEFVGRLNSVNNKAELYQHLKEENG).

It belongs to the Integrator subunit 13 family. As to quaternary structure, component of the Integrator complex, composed of core subunits INTS1, INTS2, INTS3, INTS4, INTS5, INTS6, INTS7, INTS8, INTS9/RC74, INTS10, INTS11/CPSF3L, INTS12, INTS13, INTS14 and INTS15. The core complex associates with protein phosphatase 2A subunits PPP2CA and PPP2R1A, to form the Integrator-PP2A (INTAC) complex. INTS13 is part of the tail subcomplex, composed of INTS10, INTS13, INTS14 and INTS15.

It is found in the nucleus. The protein resides in the cytoplasm. Component of the integrator complex, a multiprotein complex that terminates RNA polymerase II (Pol II) transcription in the promoter-proximal region of genes. The integrator complex provides a quality checkpoint during transcription elongation by driving premature transcription termination of transcripts that are unfavorably configured for transcriptional elongation: the complex terminates transcription by (1) catalyzing dephosphorylation of the C-terminal domain (CTD) of Pol II subunit POLR2A/RPB1 and SUPT5H/SPT5, (2) degrading the exiting nascent RNA transcript via endonuclease activity and (3) promoting the release of Pol II from bound DNA. The integrator complex is also involved in terminating the synthesis of non-coding Pol II transcripts, such as enhancer RNAs (eRNAs), small nuclear RNAs (snRNAs), telomerase RNAs and long non-coding RNAs (lncRNAs). Within the integrator complex, INTS13 is part of the integrator tail module and acts as a platform for the recruitment of transcription factors at promoters. Plays a role in gastrulation and early embryogenesis. The polypeptide is Integrator complex subunit 13 (Xenopus laevis (African clawed frog)).